The sequence spans 243 residues: Methylthioribulose-1-phosphate dehydratase (243 aa).

Cysteine 90 provides a ligand contact to substrate. Zn(2+) contacts are provided by histidine 108 and histidine 110. Glutamate 131 functions as the Proton donor/acceptor in the catalytic mechanism. Residue histidine 193 participates in Zn(2+) binding.

This sequence belongs to the aldolase class II family. MtnB subfamily. Zn(2+) is required as a cofactor.

Its subcellular location is the cytoplasm. It catalyses the reaction 5-(methylsulfanyl)-D-ribulose 1-phosphate = 5-methylsulfanyl-2,3-dioxopentyl phosphate + H2O. It functions in the pathway amino-acid biosynthesis; L-methionine biosynthesis via salvage pathway; L-methionine from S-methyl-5-thio-alpha-D-ribose 1-phosphate: step 2/6. Catalyzes the dehydration of methylthioribulose-1-phosphate (MTRu-1-P) into 2,3-diketo-5-methylthiopentyl-1-phosphate (DK-MTP-1-P). This Zygosaccharomyces rouxii (strain ATCC 2623 / CBS 732 / NBRC 1130 / NCYC 568 / NRRL Y-229) protein is Methylthioribulose-1-phosphate dehydratase.